Reading from the N-terminus, the 81-residue chain is Small ribosomal subunit protein bS18 (81 aa).

This sequence belongs to the bacterial ribosomal protein bS18 family. As to quaternary structure, part of the 30S ribosomal subunit. Forms a tight heterodimer with protein bS6.

Its function is as follows. Binds as a heterodimer with protein bS6 to the central domain of the 16S rRNA, where it helps stabilize the platform of the 30S subunit. The polypeptide is Small ribosomal subunit protein bS18 (Chlamydia muridarum (strain MoPn / Nigg)).